Here is a 162-residue protein sequence, read N- to C-terminus: NADH-quinone oxidoreductase subunit I (162 aa).

4Fe-4S ferredoxin-type domains are found at residues 54 to 83 (RRYE…IESE) and 93 to 122 (TRYD…ETQI). 8 residues coordinate [4Fe-4S] cluster: Cys63, Cys66, Cys69, Cys73, Cys102, Cys105, Cys108, and Cys112.

Belongs to the complex I 23 kDa subunit family. As to quaternary structure, NDH-1 is composed of 14 different subunits. Subunits NuoA, H, J, K, L, M, N constitute the membrane sector of the complex. [4Fe-4S] cluster is required as a cofactor.

Its subcellular location is the cell inner membrane. The enzyme catalyses a quinone + NADH + 5 H(+)(in) = a quinol + NAD(+) + 4 H(+)(out). Its function is as follows. NDH-1 shuttles electrons from NADH, via FMN and iron-sulfur (Fe-S) centers, to quinones in the respiratory chain. The immediate electron acceptor for the enzyme in this species is believed to be ubiquinone. Couples the redox reaction to proton translocation (for every two electrons transferred, four hydrogen ions are translocated across the cytoplasmic membrane), and thus conserves the redox energy in a proton gradient. The sequence is that of NADH-quinone oxidoreductase subunit I from Burkholderia vietnamiensis (strain G4 / LMG 22486) (Burkholderia cepacia (strain R1808)).